Here is a 72-residue protein sequence, read N- to C-terminus: Small ribosomal subunit protein bS18 (72 aa).

The protein belongs to the bacterial ribosomal protein bS18 family. As to quaternary structure, part of the 30S ribosomal subunit. Forms a tight heterodimer with protein bS6.

Its function is as follows. Binds as a heterodimer with protein bS6 to the central domain of the 16S rRNA, where it helps stabilize the platform of the 30S subunit. This chain is Small ribosomal subunit protein bS18, found in Aquifex aeolicus (strain VF5).